Reading from the N-terminus, the 329-residue chain is Chloroplast envelope quinone oxidoreductase homolog (329 aa).

Arginine 58 is a substrate binding site.

It belongs to the zinc-containing alcohol dehydrogenase family. Quinone oxidoreductase subfamily. As to quaternary structure, homodimer or homotetramer. Transition to monomer upon NADPH binding. Interacts with calmodulin. Interacts with HP30-1, HP30-2 and HP20.

It localises to the plastid. The protein resides in the chloroplast inner membrane. NADPH-dependent alpha,beta-unsaturated oxoene reductase reducing the double bond of medium-chain (C9) to long-chain (C18) reactive electrophile species deriving from poly-unsaturated fatty acid peroxides. The best substrates are 13-lipoxygenase-derived gamma-ketols, but is unable to reduce the double bond of short-chain alkenals and alkenones such as acrolein, crotonaldehyde, 3-buten-2-one, 4-hexen-3-one and trans-2-hexenal, or quinones such as duroquinone, decylubiquinone, coenzyme Q0, menadione, menaquinone and phylloquinone. Can use trans-2-nonenal, trans-3-decen-2-one, 4-hydroxynonenal, 12-oxo-10(E) dodecanoate (traumatin), 4-oxononenal, trans-1,3 diphenyl-2-propenone, trans-1,4-diphenyl-2-butene-1,4-dione, 9-oxo-12,13-epoxy-(10E)-octadecenoic acid (trans-EKODE-1b), 9-hydroxy-12-oxo-10(E)-octadecenoic acid, 9-Hydroxy-12-oxo-10(E),15(Z)-octadecadienoic acid and 9,13-dihydroxy-10-oxo-11-octadecenoic acid as substrates, but has no activity with 13(R,S)-hydroperoxy-9(Z),11(E)-octadecadienoic acid (13-HPOD), 9(S),12(S),13(S)-trihydroxy-10(E)-octadecenoic acid, 13-hydroxy-12-oxo-9(Z)-octadecenoic acid, 9-oxo-10(E),12(Z)-octadecadienoic acid (9-KODE), 13-oxo-9(Z),11(E)-octadecadienoic acid (13-KODE) and 12-oxo-10,15(Z)-phytodienoic acid (12-OPDA). This chain is Chloroplast envelope quinone oxidoreductase homolog, found in Arabidopsis thaliana (Mouse-ear cress).